A 398-amino-acid polypeptide reads, in one-letter code: Phosphoglycerate kinase (398 aa).

Substrate is bound by residues 23-25 (DLN), Arg-38, 61-64 (HFGR), Arg-119, and Arg-152. Residues Lys-202, Glu-324, and 354-357 (GGDT) contribute to the ATP site.

Belongs to the phosphoglycerate kinase family. In terms of assembly, monomer.

It is found in the cytoplasm. It carries out the reaction (2R)-3-phosphoglycerate + ATP = (2R)-3-phospho-glyceroyl phosphate + ADP. It functions in the pathway carbohydrate degradation; glycolysis; pyruvate from D-glyceraldehyde 3-phosphate: step 2/5. The sequence is that of Phosphoglycerate kinase from Rhodopseudomonas palustris (strain ATCC BAA-98 / CGA009).